Reading from the N-terminus, the 321-residue chain is Probable arabinan endo-1,5-alpha-L-arabinosidase A (321 aa).

Residues 1 to 19 (MYRLLSVASVPLLASLVHG) form the signal peptide. Asp-34 (proton acceptor) is an active-site residue. Catalysis depends on Glu-200, which acts as the Proton donor. Asn-295 carries N-linked (GlcNAc...) asparagine glycosylation.

Belongs to the glycosyl hydrolase 43 family.

It is found in the secreted. The enzyme catalyses Endohydrolysis of (1-&gt;5)-alpha-arabinofuranosidic linkages in (1-&gt;5)-arabinans.. It participates in glycan metabolism; L-arabinan degradation. Endo-1,5-alpha-L-arabinanase involved in degradation of pectin. Its preferred substrate is linear 1,5-alpha-L-arabinan. The protein is Probable arabinan endo-1,5-alpha-L-arabinosidase A (abnA) of Aspergillus niger (strain ATCC MYA-4892 / CBS 513.88 / FGSC A1513).